The following is a 195-amino-acid chain: Dual-action ribosomal maturation protein DarP (195 aa).

The protein belongs to the DarP family.

The protein resides in the cytoplasm. Its function is as follows. Member of a network of 50S ribosomal subunit biogenesis factors which assembles along the 30S-50S interface, preventing incorrect 23S rRNA structures from forming. Promotes peptidyl transferase center (PTC) maturation. The protein is Dual-action ribosomal maturation protein DarP of Stenotrophomonas maltophilia (strain K279a).